The sequence spans 96 residues: Large ribosomal subunit protein bL27 (96 aa).

Positions Met-1–Phe-9 are excised as a propeptide. The segment at Gly-14 to Asp-35 is disordered.

The protein belongs to the bacterial ribosomal protein bL27 family. In terms of processing, the N-terminus is cleaved by ribosomal processing cysteine protease Prp.

The chain is Large ribosomal subunit protein bL27 from Bacillus cytotoxicus (strain DSM 22905 / CIP 110041 / 391-98 / NVH 391-98).